The sequence spans 225 residues: UPF0173 metal-dependent hydrolase PYRAB05000 (225 aa).

It belongs to the UPF0173 family.

This is UPF0173 metal-dependent hydrolase PYRAB05000 from Pyrococcus abyssi (strain GE5 / Orsay).